Here is a 1616-residue protein sequence, read N- to C-terminus: Myosin-IIIa (1616 aa).

Residues 21-287 (WEITETIGKG…VSELLQHKFI (267 aa)) form the Protein kinase domain. ATP is bound by residues 27–35 (IGKGTYGKV) and Lys50. The active-site Proton acceptor is the Asp150. The 716-residue stretch at 338–1053 (KDVDDLATLE…HVEQLNLMRK (716 aa)) folds into the Myosin motor domain. The segment at 934-956 (LMDLLSKMVVGQPHFVRCIKPNS) is actin-binding. IQ domains lie at 1055–1084 (AIDK…KRKE), 1082–1111 (RKES…MKNT), and 1346–1375 (EDKA…SSFK). Residues 1401-1479 (EEINNIKKKD…RRVSSQQCLS (79 aa)) are interaction with MORN4. Disordered stretches follow at residues 1545–1567 (LPSR…QQEL) and 1581–1616 (AESP…VQQS). Basic and acidic residues-rich tracts occupy residues 1550-1564 (GPKE…RRPQ) and 1583-1592 (SPEKEEEREP). Positions 1602-1616 (LLRKTSQRRRLVQQS) are enriched in basic residues.

It in the C-terminal section; belongs to the TRAFAC class myosin-kinesin ATPase superfamily. Myosin family. In the N-terminal section; belongs to the protein kinase superfamily. STE Ser/Thr protein kinase family. As to quaternary structure, interacts with MORN4. Interacts (via C-terminus) with ESPN and ESPNL. Strongest expression in retina, retinal pigment epithelial cells, cochlea and pancreas.

Its subcellular location is the cytoplasm. It localises to the cytoskeleton. It is found in the cell projection. The protein resides in the filopodium tip. The protein localises to the stereocilium. It carries out the reaction L-seryl-[protein] + ATP = O-phospho-L-seryl-[protein] + ADP + H(+). The catalysed reaction is L-threonyl-[protein] + ATP = O-phospho-L-threonyl-[protein] + ADP + H(+). The enzyme catalyses ATP + H2O = ADP + phosphate + H(+). Functionally, actin-dependent motor protein with a protein kinase activity, playing an essential role in hearing. Probably also plays a role in vision. Required for normal cochlear hair bundle development and hearing. Plays an important role in the early steps of cochlear hair bundle morphogenesis. Influences the number and lengths of stereocilia to be produced and limits the growth of microvilli within the forming auditory hair bundles thereby contributing to the architecture of the hair bundle, including its staircase pattern. Involved in the elongation of actin in stereocilia tips by transporting the actin regulatory factor ESPN to the plus ends of actin filaments. The sequence is that of Myosin-IIIa (MYO3A) from Homo sapiens (Human).